Here is a 111-residue protein sequence, read N- to C-terminus: Urease subunit beta (111 aa).

It belongs to the urease beta subunit family. As to quaternary structure, heterotrimer of UreA (gamma), UreB (beta) and UreC (alpha) subunits. Three heterotrimers associate to form the active enzyme.

The protein resides in the cytoplasm. The catalysed reaction is urea + 2 H2O + H(+) = hydrogencarbonate + 2 NH4(+). Its pathway is nitrogen metabolism; urea degradation; CO(2) and NH(3) from urea (urease route): step 1/1. In Geobacillus kaustophilus (strain HTA426), this protein is Urease subunit beta.